A 142-amino-acid chain; its full sequence is Large ribosomal subunit protein uL13 (142 aa).

This sequence belongs to the universal ribosomal protein uL13 family. Part of the 50S ribosomal subunit.

In terms of biological role, this protein is one of the early assembly proteins of the 50S ribosomal subunit, although it is not seen to bind rRNA by itself. It is important during the early stages of 50S assembly. In Histophilus somni (strain 2336) (Haemophilus somnus), this protein is Large ribosomal subunit protein uL13.